The sequence spans 154 residues: 6,7-dimethyl-8-ribityllumazine synthase (154 aa).

5-amino-6-(D-ribitylamino)uracil is bound by residues W23, 57–59 (AFE), and 81–83 (AVI). 86 to 87 (AT) is a binding site for (2S)-2-hydroxy-3-oxobutyl phosphate. The active-site Proton donor is H89. F114 is a 5-amino-6-(D-ribitylamino)uracil binding site. Position 128 (R128) interacts with (2S)-2-hydroxy-3-oxobutyl phosphate.

Belongs to the DMRL synthase family.

The enzyme catalyses (2S)-2-hydroxy-3-oxobutyl phosphate + 5-amino-6-(D-ribitylamino)uracil = 6,7-dimethyl-8-(1-D-ribityl)lumazine + phosphate + 2 H2O + H(+). It participates in cofactor biosynthesis; riboflavin biosynthesis; riboflavin from 2-hydroxy-3-oxobutyl phosphate and 5-amino-6-(D-ribitylamino)uracil: step 1/2. Its function is as follows. Catalyzes the formation of 6,7-dimethyl-8-ribityllumazine by condensation of 5-amino-6-(D-ribitylamino)uracil with 3,4-dihydroxy-2-butanone 4-phosphate. This is the penultimate step in the biosynthesis of riboflavin. The sequence is that of 6,7-dimethyl-8-ribityllumazine synthase from Sulfurimonas denitrificans (strain ATCC 33889 / DSM 1251) (Thiomicrospira denitrificans (strain ATCC 33889 / DSM 1251)).